The chain runs to 198 residues: Recombination protein RecR (198 aa).

A C4-type zinc finger spans residues 57–72 (CSVCGNLTDDDPCLIC). A Toprim domain is found at 80 to 175 (SVILVVEDSK…KVTRLARGLA (96 aa)).

It belongs to the RecR family.

May play a role in DNA repair. It seems to be involved in an RecBC-independent recombinational process of DNA repair. It may act with RecF and RecO. This chain is Recombination protein RecR, found in Streptococcus agalactiae serotype Ia (strain ATCC 27591 / A909 / CDC SS700).